A 179-amino-acid polypeptide reads, in one-letter code: Putative 5'(3')-deoxyribonucleotidase (179 aa).

Asp-9 acts as the Nucleophile in catalysis. 3 residues coordinate Mg(2+): Asp-9, Asp-11, and Asp-135. Asp-11 acts as the Proton donor in catalysis.

Belongs to the 5'(3')-deoxyribonucleotidase family. It depends on Mg(2+) as a cofactor.

Dephosphorylates the 5' and 2'(3')-phosphates of deoxyribonucleotides. This Staphylococcus epidermidis (strain ATCC 35984 / DSM 28319 / BCRC 17069 / CCUG 31568 / BM 3577 / RP62A) protein is Putative 5'(3')-deoxyribonucleotidase.